The chain runs to 288 residues: Polyamine aminopropyltransferase (288 aa).

The PABS domain occupies 9–238 (ETLHDQFGQY…GIMTFAWATD (230 aa)). Gln33 is an S-methyl-5'-thioadenosine binding site. Residues His64 and Asp88 each contribute to the spermidine site. S-methyl-5'-thioadenosine is bound by residues Glu108 and 140 to 141 (DG). Residue Asp158 is the Proton acceptor of the active site. 158-161 (DCTD) provides a ligand contact to spermidine. Residue Pro165 participates in S-methyl-5'-thioadenosine binding.

Belongs to the spermidine/spermine synthase family. Homodimer or homotetramer.

Its subcellular location is the cytoplasm. It carries out the reaction S-adenosyl 3-(methylsulfanyl)propylamine + putrescine = S-methyl-5'-thioadenosine + spermidine + H(+). It functions in the pathway amine and polyamine biosynthesis; spermidine biosynthesis; spermidine from putrescine: step 1/1. Its function is as follows. Catalyzes the irreversible transfer of a propylamine group from the amino donor S-adenosylmethioninamine (decarboxy-AdoMet) to putrescine (1,4-diaminobutane) to yield spermidine. In Shigella boydii serotype 4 (strain Sb227), this protein is Polyamine aminopropyltransferase.